A 434-amino-acid chain; its full sequence is Enolase (434 aa).

(2R)-2-phosphoglycerate is bound at residue glutamine 165. The Proton donor role is filled by glutamate 207. The Mg(2+) site is built by aspartate 244, glutamate 291, and aspartate 318. Residues lysine 343, arginine 372, serine 373, and lysine 394 each contribute to the (2R)-2-phosphoglycerate site. Lysine 343 (proton acceptor) is an active-site residue.

Belongs to the enolase family. Requires Mg(2+) as cofactor.

Its subcellular location is the cytoplasm. The protein localises to the secreted. It localises to the cell surface. The enzyme catalyses (2R)-2-phosphoglycerate = phosphoenolpyruvate + H2O. The protein operates within carbohydrate degradation; glycolysis; pyruvate from D-glyceraldehyde 3-phosphate: step 4/5. In terms of biological role, catalyzes the reversible conversion of 2-phosphoglycerate (2-PG) into phosphoenolpyruvate (PEP). It is essential for the degradation of carbohydrates via glycolysis. In Staphylococcus epidermidis (strain ATCC 35984 / DSM 28319 / BCRC 17069 / CCUG 31568 / BM 3577 / RP62A), this protein is Enolase.